The following is a 510-amino-acid chain: MTLWLPASGKIYLPPTPPVARVQSTDEYVERTDIYYHATSDRLLTVGHPYFDVRSQDGQKIEVPKVSGNQYRSFRVTFPDPNKFALADMSVYDPDKYRLVWACKGLEIGRGQPLGVGTTGHPLFNKVRDTENSSNYQNTSTDDRQNTSFDPKQVQMFIIGCTPCLGEYWDKAPVCDNAGDQTGLCPPLELKNSVIEDGDMFDIGFGNINNKTLSFNRSDVSLDIVNETCKYPDFLTMSNDVYGDSCFFFVRREQCYARHYFVRGGAVGDAIPDGTVNQNHNYYLPAKNGQGQRTLGNSTYFPTVSGSLVTSDAQLFNRPFWLQRAQGHNNGILWGNQMFVTVADNTRNTNFTISVSTENGGAQEYDSANIREYLRHVEEYQLSFILQLCKVPLNAEVLTQINAMNSGILENWQLGFVPTPDNSVHDTYRYITSKATKCPDAVPETEKEDPFGQYTFWNVDMTEKLSLDLDQYPLGRKFLFQAGLQTARTRAVKRPLVRKSSKSVKRKRTQ.

The interval 128–147 (RDTENSSNYQNTSTDDRQNT) is disordered. Residues 132 to 147 (NSSNYQNTSTDDRQNT) are compositionally biased toward polar residues.

It belongs to the papillomaviridae L1 protein family. Self-assembles into homopentamers. The capsid has an icosahedral symmetry and consists of 72 capsomers, with each capsomer being a pentamer of L1. Interacts with the minor capsid protein L2; this interaction is necessary for viral genome encapsidation. Interacts with protein E2; this interaction enhances E2-dependent replication and transcription activation.

Its subcellular location is the virion. It localises to the host nucleus. In terms of biological role, forms an icosahedral capsid with a T=7 symmetry and a 50 nm diameter. The capsid is composed of 72 pentamers linked to each other by disulfide bonds and associated with L2 proteins. Binds to heparan sulfate proteoglycans on cell surface of basal layer keratinocytes to provide initial virion attachment. This binding mediates a conformational change in the virus capsid that facilitates efficient infection. The virion enters the host cell via endocytosis. During virus trafficking, L1 protein dissociates from the viral DNA and the genomic DNA is released to the host nucleus. The virion assembly takes place within the cell nucleus. Encapsulates the genomic DNA together with protein L2. The polypeptide is Major capsid protein L1 (Human papillomavirus 38).